The chain runs to 88 residues: Cell division topological specificity factor (88 aa).

This sequence belongs to the MinE family.

Its function is as follows. Prevents the cell division inhibition by proteins MinC and MinD at internal division sites while permitting inhibition at polar sites. This ensures cell division at the proper site by restricting the formation of a division septum at the midpoint of the long axis of the cell. This is Cell division topological specificity factor from Citrobacter koseri (strain ATCC BAA-895 / CDC 4225-83 / SGSC4696).